Consider the following 262-residue polypeptide: Carbohydrate deacetylase (262 aa).

His129 provides a ligand contact to Mg(2+).

The protein belongs to the YdjC deacetylase family. As to quaternary structure, homodimer. It depends on Mg(2+) as a cofactor.

Its function is as follows. Probably catalyzes the deacetylation of acetylated carbohydrates an important step in the degradation of oligosaccharides. This is Carbohydrate deacetylase from Enterococcus faecalis (strain ATCC 700802 / V583).